Here is a 190-residue protein sequence, read N- to C-terminus: Frizzled-6 (190 aa).

An FZ domain is found at 1–20 (FGFAWPEELECSRLVNCDET). The Extracellular portion of the chain corresponds to 1-89 (FGFAWPEELE…NYELDVAKSF (89 aa)). The helical transmembrane segment at 90–110 (IGIVSIFCLCATLFTFLTFLI) threads the bilayer. Residues 111–121 (DVKRFRYPERP) are Cytoplasmic-facing. A helical membrane pass occupies residues 122 to 142 (IIYYSVCYSIVSLMYFIGFLL). The Extracellular portion of the chain corresponds to 143-169 (GNRTACNKADDKLEIGETVVLGSQNKA). Asn144 carries N-linked (GlcNAc...) asparagine glycosylation. A helical transmembrane segment spans residues 170–190 (CTVLFMVLYFFTMAGTIWWVI).

It belongs to the G-protein coupled receptor Fz/Smo family.

Its subcellular location is the membrane. The protein localises to the cell membrane. The protein resides in the cell surface. It is found in the apical cell membrane. It localises to the cytoplasmic vesicle membrane. Receptor for Wnt proteins. Most of frizzled receptors are coupled to the beta-catenin canonical signaling pathway, which leads to the activation of disheveled proteins, inhibition of GSK-3 kinase, nuclear accumulation of beta-catenin and activation of Wnt target genes. A second signaling pathway involving PKC and calcium fluxes has been seen for some family members, but it is not yet clear if it represents a distinct pathway or if it can be integrated in the canonical pathway, as PKC seems to be required for Wnt-mediated inactivation of GSK-3 kinase. Both pathways seem to involve interactions with G-proteins. Activation by Wnt5A stimulates PKC activity via a G-protein-dependent mechanism. Involved in transduction and intercellular transmission of polarity information during tissue morphogenesis and/or in differentiated tissues. Together with FZD3, may be involved in the neural tube closure and plays a role in the regulation of the establishment of planar cell polarity (PCP), particularly in the orientation of asymmetric bundles of stereocilia on the apical faces of a subset of auditory and vestibular sensory cells located in the inner ear. The polypeptide is Frizzled-6 (FZD6) (Gallus gallus (Chicken)).